Here is a 204-residue protein sequence, read N- to C-terminus: CASP-like protein 2U1 (204 aa).

The Cytoplasmic segment spans residues 1–36 (MGVLGGDAHVPIGSQVSPGSVVVTNNESFGHRKLLK). Residues 37–57 (GVDFLVRIKAFAFCLAVIVLL) traverse the membrane as a helical segment. At 58–84 (KNNVQTTVIAPGIVLQAKYNNTKAPVS) the chain is on the extracellular side. The N-linked (GlcNAc...) asparagine glycan is linked to asparagine 77. The chain crosses the membrane as a helical span at residues 85–105 (LLVLASICCGYAFLQAVVSLL). Residues 106 to 117 (SFIRDKRVLNNT) are Cytoplasmic-facing. A helical membrane pass occupies residues 118-138 (VLAWLTFLLDQVLTYLLLGSA). Residues 139–170 (AATAEAAYIAKRGEDKVQWKAVCGPFKRFCDH) are Extracellular-facing. A helical transmembrane segment spans residues 171 to 191 (FAATVFLSFIAVIAFAVSAAI). Residues 192–204 (SAYYLFRRSKGFK) lie on the Cytoplasmic side of the membrane.

It belongs to the Casparian strip membrane proteins (CASP) family. In terms of assembly, homodimer and heterodimers.

The protein resides in the cell membrane. This is CASP-like protein 2U1 from Selaginella moellendorffii (Spikemoss).